The primary structure comprises 239 residues: MKLNISYPANGTQKLIEIDDDRRLRVFMEKRMGQEVPGDSVGPEFAGYVFKITGGNDKQGFPMFQGVLLPHRVRLLLRAGHPCYRPRRDGERKRKSVRGCIVGQDLAVLALAIVKQGEQDIPGLTDVTVPKRLGPKRASKIRRFFNLSKEDDVRQFVIRREVVPKKEGKKPYTKAPKIQRLVTPRTLQHKRHRFALKRRQAEKNREEAAEFAQLMAKRVAEAKQKKEVVKARRASSMKK.

Phosphoserine occurs at positions 148, 235, and 236.

It belongs to the eukaryotic ribosomal protein eS6 family. As to quaternary structure, component of the small ribosomal subunit (SSU). Mature yeast ribosomes consist of a small (40S) and a large (60S) subunit. The 40S small subunit contains 1 molecule of ribosomal RNA (18S rRNA) and at least 33 different proteins. The large 60S subunit contains 3 rRNA molecules (25S, 5.8S and 5S rRNA) and at least 46 different proteins. Interacts with snoRNA U3. uS11 interacts with MPP10. Component of the ribosomal small subunit (SSU) processome composed of at least 40 protein subunits and snoRNA U3.

The protein localises to the cytoplasm. Functionally, component of the ribosome, a large ribonucleoprotein complex responsible for the synthesis of proteins in the cell. The small ribosomal subunit (SSU) binds messenger RNAs (mRNAs) and translates the encoded message by selecting cognate aminoacyl-transfer RNA (tRNA) molecules. The large subunit (LSU) contains the ribosomal catalytic site termed the peptidyl transferase center (PTC), which catalyzes the formation of peptide bonds, thereby polymerizing the amino acids delivered by tRNAs into a polypeptide chain. The nascent polypeptides leave the ribosome through a tunnel in the LSU and interact with protein factors that function in enzymatic processing, targeting, and the membrane insertion of nascent chains at the exit of the ribosomal tunnel. eS6 is involved in nucleolar processing of pre-18S ribosomal RNA and ribosome assembly. This Schizosaccharomyces pombe (strain 972 / ATCC 24843) (Fission yeast) protein is Small ribosomal subunit protein eS6B (rps602).